The sequence spans 286 residues: UDP-3-O-acyl-N-acetylglucosamine deacetylase (286 aa).

Zn(2+)-binding residues include His-79, His-237, and Asp-241. His-264 functions as the Proton donor in the catalytic mechanism.

The protein belongs to the LpxC family. The cofactor is Zn(2+).

The catalysed reaction is a UDP-3-O-[(3R)-3-hydroxyacyl]-N-acetyl-alpha-D-glucosamine + H2O = a UDP-3-O-[(3R)-3-hydroxyacyl]-alpha-D-glucosamine + acetate. Its pathway is glycolipid biosynthesis; lipid IV(A) biosynthesis; lipid IV(A) from (3R)-3-hydroxytetradecanoyl-[acyl-carrier-protein] and UDP-N-acetyl-alpha-D-glucosamine: step 2/6. In terms of biological role, catalyzes the hydrolysis of UDP-3-O-myristoyl-N-acetylglucosamine to form UDP-3-O-myristoylglucosamine and acetate, the committed step in lipid A biosynthesis. The chain is UDP-3-O-acyl-N-acetylglucosamine deacetylase from Brucella abortus (strain 2308).